The sequence spans 122 residues: MIQEQTILNVADNSGARSAMCIKVLGGSRRRYARIGDIIKITIKEAIPRGKVKKGEVLKAVVVRTKKGVRRSDGSIIRFDNNACVVLNNNEQPVGTRIFGPVTRELRIEKFMKIISLAPEVL.

Belongs to the universal ribosomal protein uL14 family. As to quaternary structure, part of the 50S ribosomal subunit. Forms a cluster with proteins L3 and L19. In the 70S ribosome, L14 and L19 interact and together make contacts with the 16S rRNA in bridges B5 and B8.

In terms of biological role, binds to 23S rRNA. Forms part of two intersubunit bridges in the 70S ribosome. The polypeptide is Large ribosomal subunit protein uL14 (Buchnera aphidicola subsp. Schizaphis graminum (strain Sg)).